The primary structure comprises 190 residues: Inner membrane-spanning protein YciB (190 aa).

Transmembrane regions (helical) follow at residues 22 to 42 (IYVATGALIVATAIQIVLTFA), 50 to 70 (MQLITFAMVAIFGGMTIFLHD), 76 to 96 (WKVTIVYAIFAIGLAVSHAMG), 118 to 138 (INWAWVAFFSFCAGLNVYVAF), and 148 to 168 (FKVFGLLIATFAYMIATGFYI).

Belongs to the YciB family.

Its subcellular location is the cell inner membrane. In terms of biological role, plays a role in cell envelope biogenesis, maintenance of cell envelope integrity and membrane homeostasis. The protein is Inner membrane-spanning protein YciB of Vibrio campbellii (strain ATCC BAA-1116).